Consider the following 338-residue polypeptide: MELRRGGVGNQAAGRRMDGDCRDGGCGSKDAGSEDYENLPTSASVSTHMTAGAMAGILEHSIMYPVDSVKTRMQSLNPDPKARYTSIYGALKRIMHTEGFWRPLRGLNVMMMGAGPAHAMYFACYENMKRTLNDVFSHQGNSHLANGVAGSMATLLHDAVMNPAEVVKQRLQMYNSQHQSAFSCIRTVWRTEGLGAFYRSYTTQLTMNIPFQSIHFITYEFLQEQVNPRRDYNPQSHIISGGLAGALAAAATTPLDVCKTLLNTQENMALSLANVSGRLSGMANAFRTVYQLNGLAGYFKGIQARVIYQMPSTAISWSVYEFFKYILTKRQLENRTLY.

Residues 1-37 are disordered; sequence MELRRGGVGNQAAGRRMDGDCRDGGCGSKDAGSEDYE. Solcar repeat units follow at residues 43–131, 141–225, and 232–326; these read ASVS…MKRT, NSHL…LQEQ, and YNPQ…FKYI. The next 6 helical transmembrane spans lie at 45-64, 106-125, 143-162, 200-219, 234-253, and 301-320; these read VSTHMTAGAMAGILEHSIMY, GLNVMMMGAGPAHAMYFACY, HLANGVAGSMATLLHDAVMN, SYTTQLTMNIPFQSIHFITY, PQSHIISGGLAGALAAAATT, and GIQARVIYQMPSTAISWSVY.

It belongs to the mitochondrial carrier (TC 2.A.29) family. Interacts with ACB10; this interaction stabilizes SLC25A37 and enhances the function of SLC25A37 to import mitochondrial iron during erythroid differentiation. Highly expressed in hematopoietic organs, fetal liver, bone marrow and spleen.

It is found in the mitochondrion inner membrane. The catalysed reaction is Fe(2+)(in) = Fe(2+)(out). In terms of biological role, mitochondrial iron transporter that specifically mediates iron uptake in developing erythroid cells, thereby playing an essential role in heme biosynthesis. The chain is Mitoferrin-1 (Slc25a37) from Mus musculus (Mouse).